The following is a 461-amino-acid chain: Glycogen synthase (461 aa).

Lys15 contacts ADP-alpha-D-glucose.

This sequence belongs to the glycosyltransferase 1 family. Bacterial/plant glycogen synthase subfamily.

It carries out the reaction [(1-&gt;4)-alpha-D-glucosyl](n) + ADP-alpha-D-glucose = [(1-&gt;4)-alpha-D-glucosyl](n+1) + ADP + H(+). Its pathway is glycan biosynthesis; glycogen biosynthesis. Functionally, synthesizes alpha-1,4-glucan chains using ADP-glucose. The sequence is that of Glycogen synthase from Fusobacterium nucleatum subsp. nucleatum (strain ATCC 25586 / DSM 15643 / BCRC 10681 / CIP 101130 / JCM 8532 / KCTC 2640 / LMG 13131 / VPI 4355).